A 139-amino-acid polypeptide reads, in one-letter code: Ribulose bisphosphate carboxylase small subunit (139 aa).

It belongs to the RuBisCO small chain family. In terms of assembly, heterohexadecamer of 8 large and 8 small subunits.

It localises to the plastid. The protein localises to the chloroplast. In terms of biological role, ruBisCO catalyzes two reactions: the carboxylation of D-ribulose 1,5-bisphosphate, the primary event in carbon dioxide fixation, as well as the oxidative fragmentation of the pentose substrate in the photorespiration process. Both reactions occur simultaneously and in competition at the same active site. Although the small subunit is not catalytic it is essential for maximal activity. This chain is Ribulose bisphosphate carboxylase small subunit, found in Ectocarpus siliculosus (Brown alga).